The chain runs to 267 residues: Undecaprenyl-diphosphatase (267 aa).

8 consecutive transmembrane segments (helical) span residues 1-21 (MSELQIVVLALIQGLTEFLPI), 39-59 (QGLAFDLILNIGTLSAVLIYF), 87-107 (WWILWSTIPAALIGFFGKSLV), 113-133 (SGYVIAVTTTVFGLLLWWADA), 144-164 (TGLKGALFIGFAQVLALIPGT), 189-209 (FLMSIPIIAMASGYDLLKFIL), 219-239 (LFLGAGISFVSAILCIHVFLI), and 244-264 (VGMMPFVIYRLLLGGFLFYIL).

This sequence belongs to the UppP family.

Its subcellular location is the cell inner membrane. It catalyses the reaction di-trans,octa-cis-undecaprenyl diphosphate + H2O = di-trans,octa-cis-undecaprenyl phosphate + phosphate + H(+). Catalyzes the dephosphorylation of undecaprenyl diphosphate (UPP). Confers resistance to bacitracin. This is Undecaprenyl-diphosphatase from Psychromonas ingrahamii (strain DSM 17664 / CCUG 51855 / 37).